A 421-amino-acid polypeptide reads, in one-letter code: NADH-dependent phenylglyoxylate dehydrogenase subunit epsilon (421 aa).

Residues 15 to 18 (SSHA), 39 to 40 (TR), and 279 to 297 (ATAQARGFFTGTKVMNAIL) each bind FAD.

Belongs to the FAD-dependent oxidoreductase family. In terms of assembly, dimer of heteropentamers composed of an alpha (PadG), a beta (PadI), a gamma (PadE), a delta (PadF) and an epsilon (PadH) subunit. FAD is required as a cofactor.

The enzyme catalyses phenylglyoxylate + NAD(+) + CoA = benzoyl-CoA + CO2 + NADH. Its activity is regulated as follows. Activated by magnesium ions and thiamine diphosphate. Involved in the anaerobic metabolism of phenylalanine and phenylacetate. Catalyzes the oxidative decarboxylation of phenylglyoxylate to benzoyl-CoA and CO(2). It can also react slowly with 2-oxo-3-methylbutanoate and use different electron acceptors such as benzyl viologen, methyl viologen, FAD or FMN, but NAD seems to be the physiological electron acceptor. Also catalyzes an isotope exchange between CO(2) and the carboxyl group which proves partial or complete reversibility of the oxidative decarboxylation reaction. In Aromatoleum evansii (Azoarcus evansii), this protein is NADH-dependent phenylglyoxylate dehydrogenase subunit epsilon (padH).